A 1738-amino-acid polypeptide reads, in one-letter code: Sodium leak channel NALCN (1738 aa).

The Cytoplasmic portion of the chain corresponds to 1–36 (MLKRKQSSRVEAQPVTDFGPDESLSDNADILWINKP). A helical transmembrane segment spans residues 37 to 57 (WVHSLLRICAIISVISVCMNT). Topologically, residues 58–65 (PMTFEHYP) are extracellular. The helical transmembrane segment at 66–90 (PLQYVTFTLDTLLMFLYTAEMIAKM) threads the bilayer. Residues 91 to 106 (HIRGIVKGDSSYVKDR) lie on the Cytoplasmic side of the membrane. The helical transmembrane segment at 107–129 (WCVFDGFMVFCLWVSLVLQVFEI) threads the bilayer. Over 130-137 (ADIVDQMS) the chain is Extracellular. The helical; Voltage-sensor transmembrane segment at 138-158 (PWGMLRIPRPLIMIRAFRIYF) threads the bilayer. Residues 159–173 (RFELPRTRITNILKR) are Cytoplasmic-facing. Residues 174–199 (SGEQIWSVSIFLLFFLLLYGILGVQM) form a helical membrane-spanning segment. The Extracellular portion of the chain corresponds to 200-269 (FGTFTYHCVV…YSGFNEIGTS (70 aa)). Intrachain disulfides connect Cys-207–Cys-239 and Cys-229–Cys-245. Residues Asn-210 and Asn-216 are each glycosylated (N-linked (GlcNAc...) asparagine). Positions 270 to 289 (IFTVYEASSQEGWVFLMYRA) form an intramembrane region, pore-forming. The Extracellular portion of the chain corresponds to 290–294 (IDSFP). A helical transmembrane segment spans residues 295-322 (RWRSYFYFITLIFFLAWLVKNVFIAVII). Residues 323 to 382 (ETFAEIRVQFQQMWGTRSSTTSTATTQMFHEDAAGGWQLVAVDVNKPQGRAPACLQKMMR) lie on the Cytoplasmic side of the membrane. Residues 383–403 (SSVFHMFILSMVTVDVIVAAS) form a helical membrane-spanning segment. The Extracellular segment spans residues 404–416 (NYYKGENFRRQYD). Residues 417–439 (EFYLAEVAFTVLFDLEALLKIWC) traverse the membrane as a helical segment. Residues 440-447 (LGFTGYIS) lie on the Cytoplasmic side of the membrane. A helical membrane pass occupies residues 448–468 (SSLHKFELLLVIGTTLHVYPD). Over 469–472 (LYHS) the chain is Extracellular. A helical; Voltage-sensor membrane pass occupies residues 473–492 (QFTYFQVLRVVRLIKISPAL). Topologically, residues 493–502 (EDFVYKIFGP) are cytoplasmic. The helical transmembrane segment at 503-530 (GKKLGSLVVFTASLLIVMSAISLQMFCF) threads the bilayer. Residues 531 to 543 (VEELDRFTTFPRA) lie on the Extracellular side of the membrane. The pore-forming intramembrane region spans 544-563 (FMSMFQILTQEGWVDVMDQT). Topologically, residues 564–578 (LNAVGHMWAPLVAIY) are extracellular. Residues 579-599 (FILYHLFATLILLSLFVAVIL) traverse the membrane as a helical segment. Over 600–886 (DNLELDEDLK…QLYDLLGLVT (287 aa)) the chain is Cytoplasmic. The disordered stretch occupies residues 762 to 785 (QERRSLRHGSNSQRISRGKSLETL). Residues 795–830 (YRNAQREDSEIKMIQEKKEQAEMKRKVQEEELRENH) adopt a coiled-coil conformation. A helical transmembrane segment spans residues 887–906 (YLDWVMITVTICSCISMMFE). Residues 907–915 (SPFRRVMHA) are Extracellular-facing. The helical transmembrane segment at 916–939 (PTLQIAEYVFVIFMSIELNLKIMA) threads the bilayer. Residues 940 to 947 (DGLFFTPT) lie on the Cytoplasmic side of the membrane. Residues 948-972 (AVIRDFGGVMDIFIYLVSLIFLCWM) traverse the membrane as a helical segment. At 973-980 (PQNVPAES) the chain is on the extracellular side. The chain crosses the membrane as a helical; Voltage-sensor span at residues 981–1003 (GAQLLMVLRCLRPLRIFKLVPQM). Residues 1004–1015 (RKVVRELFSGFK) are Cytoplasmic-facing. The helical transmembrane segment at 1016-1039 (EIFLVSILLLTLMLVFASFGVQLF) threads the bilayer. Topologically, residues 1040 to 1104 (AGKLAKCNDP…NFNFDNVGNA (65 aa)) are extracellular. Cys-1046 and Cys-1057 are disulfide-bonded. N-linked (GlcNAc...) asparagine glycosylation occurs at Asn-1064. Residues 1105–1124 (MLALFEVLSLKGWVEVRDVI) constitute an intramembrane region (pore-forming). Topologically, residues 1125–1129 (IHRVG) are extracellular. Residues 1130–1159 (PIHGIYIHVFVFLGCMIGLTLFVGVVIANF) traverse the membrane as a helical segment. Residues 1160-1210 (NENKGTALLTVDQRRWEDLKSRLKIAQPLHLPPRPDNDGFRAKMYDITQHP) are Cytoplasmic-facing. The chain crosses the membrane as a helical span at residues 1211 to 1227 (FFKRTIALLVLAQSVLL). Residues 1228 to 1236 (SVKWDVDDP) are Extracellular-facing. A helical transmembrane segment spans residues 1237-1260 (VTVPLATMSVVFTFIFVLEVTMKI). The Cytoplasmic segment spans residues 1261 to 1271 (IAMSPAGFWQS). The chain crosses the membrane as a helical span at residues 1272 to 1293 (RRNRYDLLVTSLGVVWVVLHFA). The Extracellular portion of the chain corresponds to 1294 to 1296 (LLN). Residues 1297–1318 (AYTYMMGACVIVFRFFSICGKH) traverse the membrane as a helical; Voltage-sensor segment. The Cytoplasmic segment spans residues 1319–1331 (VTLKMLLLTVVVS). Residues 1332 to 1357 (MYKSFFIIVGMFLLLLCYAFAGVVLF) form a helical membrane-spanning segment. At 1358–1378 (GTVKYGENINRHANFSSAGKA) the chain is on the extracellular side. Residues 1379-1398 (ITVLFRIVTGEDWNKIMHDC) constitute an intramembrane region (pore-forming). The Extracellular segment spans residues 1399-1420 (MVQPPFCTPDEFTYWATDCGNY). A disulfide bond links Cys-1405 and Cys-1417. A helical transmembrane segment spans residues 1421–1447 (AGALMYFCSFYVIIAYIMLNLLVAIIV). Over 1448–1738 (ENFSLFYSTE…DESGDDLLDI (291 aa)) the chain is Cytoplasmic. Residues 1602 to 1679 (EQERSRFLNP…WRLPSAPKPI (78 aa)) form a disordered region. Residues 1613 to 1631 (SIETTQPSEDSNANSQDHS) show a composition bias toward polar residues. Over residues 1633-1648 (QPETSSQQQLLSPTLS) the composition is skewed to low complexity.

The protein belongs to the NALCN family. Found in a complex with NALCN, UNC79, UNC80 and NACL1; these auxiliary subunits are indispensable for the function of the NALCN channel. Interacts with UNC80; required for the NALCN activation/inhibition by GPCRs in neurons. Found in a complex with NALCN, UNC79 and UNC80; UNC80 bridges NALCN to UNC79. Interacts with CHRM3. In terms of processing, phosphorylated on tyrosine residues. Widely expressed in the brain and spinal cord neurons. Expressed also in pancreatic islet cells.

It is found in the cell membrane. The enzyme catalyses Na(+)(in) = Na(+)(out). With respect to regulation, inhibited by low micromolar concentrations of Gd(3+) and high micromolar concentrations of verapamil. Insensitive to tetrodotoxin (TTX) and potentiated by low external Ca(2+) concentration. In terms of biological role, voltage-gated ion channel responsible for the resting Na(+) permeability that controls neuronal excitability. NALCN channel functions as a multi-protein complex, which consists at least of NALCN, NALF1, UNC79 and UNC80. NALCN is the voltage-sensing, pore-forming subunit of the NALCN channel complex. NALCN channel complex is constitutively active and conducts monovalent cations but is blocked by physiological concentrations of extracellular divalent cations. In addition to its role in regulating neuronal excitability, is required for normal respiratory rhythm, systemic osmoregulation by controlling the serum sodium concentration and in the regulation of the intestinal pace-making activity in the interstitial cells of Cajal. Plays a critical role in both maintenance of spontaneous firing of substantia nigra pars reticulata (SNr) neurons and physiological modulation of SNr neuron excitability. NALCN channel is also activated by neuropeptides such as neurotensin and substance P (SP) through a SRC family kinases-dependent pathway. In addition, NALCN activity is enhanced/modulated by several GPCRs, such as CHRM3. In Mus musculus (Mouse), this protein is Sodium leak channel NALCN (Nalcn).